Consider the following 263-residue polypeptide: Small ribosomal subunit protein uS15m (263 aa).

Residues 1 to 70 constitute a mitochondrion transit peptide; sequence MVLKSVFRST…VRQYARPSRK (70 aa). The segment covering 238–251 has biased composition (basic and acidic residues); that stretch reads EREKQKAEEAERKK. Residues 238–263 are disordered; the sequence is EREKQKAEEAERKKSSSSTNPQETAA.

It belongs to the universal ribosomal protein uS15 family. Component of the mitochondrial ribosome small subunit (28S) which comprises a 12S rRNA and about 30 distinct proteins.

Its subcellular location is the mitochondrion. The polypeptide is Small ribosomal subunit protein uS15m (mrps15) (Danio rerio (Zebrafish)).